We begin with the raw amino-acid sequence, 430 residues long: tRNA(Ile)-lysidine synthase (430 aa).

Residue 21 to 26 coordinates ATP; the sequence is SGGLDS.

The protein belongs to the tRNA(Ile)-lysidine synthase family.

It is found in the cytoplasm. It catalyses the reaction cytidine(34) in tRNA(Ile2) + L-lysine + ATP = lysidine(34) in tRNA(Ile2) + AMP + diphosphate + H(+). Functionally, ligates lysine onto the cytidine present at position 34 of the AUA codon-specific tRNA(Ile) that contains the anticodon CAU, in an ATP-dependent manner. Cytidine is converted to lysidine, thus changing the amino acid specificity of the tRNA from methionine to isoleucine. The protein is tRNA(Ile)-lysidine synthase of Salmonella typhimurium (strain LT2 / SGSC1412 / ATCC 700720).